We begin with the raw amino-acid sequence, 557 residues long: Glutamine--tRNA ligase (557 aa).

The 'HIGH' region motif lies at 42 to 52; it reads PEPNGYLHIGH. Residues 43–45 and 49–55 contribute to the ATP site; these read EPN and HIGHAKS. The L-glutamine site is built by Asp75 and Tyr220. Residues Thr239 and 270–271 contribute to the ATP site; that span reads RL. Positions 277 to 281 match the 'KMSKS' region motif; sequence LTSKR.

It belongs to the class-I aminoacyl-tRNA synthetase family. In terms of assembly, monomer.

It is found in the cytoplasm. It catalyses the reaction tRNA(Gln) + L-glutamine + ATP = L-glutaminyl-tRNA(Gln) + AMP + diphosphate. This chain is Glutamine--tRNA ligase, found in Haemophilus influenzae (strain 86-028NP).